Reading from the N-terminus, the 99-residue chain is Prostate and testis expressed protein 14 (99 aa).

Residues 1–21 (MGKNILLLLLGLSFVIGFLQA) form the signal peptide. The UPAR/Ly6 domain occupies 22–99 (LRCLECDMLN…CHDQSLCNEF (78 aa)). 5 cysteine pairs are disulfide-bonded: C24-C51, C27-C36, C43-C69, C73-C89, and C90-C96. N40 carries N-linked (GlcNAc...) asparagine glycosylation. 2 N-linked (GlcNAc...) asparagine glycosylation sites follow: N75 and N82.

It belongs to the PATE family. As to quaternary structure, monomer.

It localises to the secreted. The protein is Prostate and testis expressed protein 14 of Rattus norvegicus (Rat).